A 308-amino-acid chain; its full sequence is Ornithine carbamoyltransferase (308 aa).

Carbamoyl phosphate is bound by residues Ser56–Thr59, Gln83, Arg107, and His134–Gln137. L-ornithine contacts are provided by residues Asn165, Asp225, and Ser229–Met230. Residues Cys266 to Leu267 and Arg294 contribute to the carbamoyl phosphate site.

The protein belongs to the aspartate/ornithine carbamoyltransferase superfamily. OTCase family.

It is found in the cytoplasm. The catalysed reaction is carbamoyl phosphate + L-ornithine = L-citrulline + phosphate + H(+). It functions in the pathway amino-acid biosynthesis; L-arginine biosynthesis; L-arginine from L-ornithine and carbamoyl phosphate: step 1/3. In terms of biological role, reversibly catalyzes the transfer of the carbamoyl group from carbamoyl phosphate (CP) to the N(epsilon) atom of ornithine (ORN) to produce L-citrulline. This is Ornithine carbamoyltransferase from Cereibacter sphaeroides (strain ATCC 17023 / DSM 158 / JCM 6121 / CCUG 31486 / LMG 2827 / NBRC 12203 / NCIMB 8253 / ATH 2.4.1.) (Rhodobacter sphaeroides).